A 5634-amino-acid chain; its full sequence is Hemicentin-1 (5634 aa).

A signal peptide spans 1 to 21 (MIAQEVVHTVFLVALFRSSLA). The VWFA domain occupies 41-216 (TLAFVFDVTG…EVLKWVEEAV (176 aa)). 29 consecutive Ig-like C2-type domains span residues 431–517 (PKVT…FDVS), 520–607 (PPII…VFLT), 612–697 (PKVT…STLR), 702–788 (PKLV…LTLD), 793–883 (PVFI…TTVT), 890–976 (PLIG…TSVA), 981–1067 (PSIQ…VQLT), 1072–1166 (PRVF…VKLS), 1171–1254 (PKIQ…AEVT), 1261–1353 (PSVE…YNLK), 1357–1446 (PPVI…FSVN), 1451–1540 (PSIL…IKLT), 1545–1633 (PSIK…FHVD), 1638–1723 (PTIE…REIK), 1732–1820 (PAVE…FEVT), 1825–1913 (PTIK…TQLH), 1918–2006 (PSLD…YSLQ), 2011–2096 (PSIS…RDID), 2103–2189 (PNIM…YNVN), 2194–2284 (PSIY…YNLQ), 2289–2378 (PSIT…YDLS), 2383–2472 (PSII…FGLS), 2477–2565 (PHIV…FRLN), 2570–2661 (PTIA…YEVK), 2665–2762 (PPII…VNIQ), 2765–2863 (PSFQ…YDVH), 2867–2958 (PPVI…FNLN), 2962–3050 (PPSV…VSLT), and 3055–3145 (PSIK…FHLN). 2 disulfides stabilise this stretch: C451–C499 and C541–C591. A glycan (O-linked (GalNAc...) threonine) is linked at T615. Cystine bridges form between C633–C681, C723–C772, C814–C867, C911–C960, C1002–C1051, C1101–C1150, C1192–C1240, C1287–C1337, C1381–C1430, C1474–C1524, and C1568–C1617. O-linked (GalNAc...) threonine glycosylation is found at T1292 and T1386. T1639 is a glycosylation site (O-linked (GalNAc...) threonine). 2 cysteine pairs are disulfide-bonded: C1662–C1711 and C1755–C1804. O-linked (GalNAc...) threonine glycosylation occurs at T1826. 14 disulfide bridges follow: C1847/C1897, C1941/C1990, C2032/C2082, C2124/C2173, C2217/C2268, C2313/C2362, C2407/C2456, C2500/C2549, C2596/C2645, C2695/C2744, C2798/C2847, C2893/C2942, C2985/C3034, and C3080/C3129. A glycan (O-linked (GalNAc...) threonine) is linked at T3151. 15 Ig-like C2-type domains span residues 3155-3227 (PETE…VASN), 3244-3334 (PSVA…FNLN), 3339-3428 (PKIR…YSLQ), 3433-3515 (PNMD…GEVS), 3526-3614 (PHIN…YLVR), 3619-3707 (PNIA…FNLT), 3712-3798 (PSIG…IDLQ), 3803-3891 (PSIA…VDLT), 3896-3982 (PTIA…VTLR), 3987-4073 (PVIQ…VKLN), 4077-4163 (PPVI…STLT), 4168-4252 (PRIQ…RIVT), 4259-4332 (PTFT…AENS), 4347-4434 (PPVF…MSLT), and 4439-4526 (PIIT…VIVQ). 8 cysteine pairs are disulfide-bonded: C3172–C3223, C3267–C3318, C3363–C3412, C3456–C3505, C3549–C3598, C3642–C3691, C3733–C3782, and C3824–C3875. T3897 carries O-linked (GalNAc...) threonine glycosylation. 25 cysteine pairs are disulfide-bonded: C3917–C3966, C4008–C4057, C4099–C4147, C4189–C4238, C4280–C4327, C4370–C4418, C4460–C4508, C4540–C4577, C4544–C4582, C4555–C4567, C4597–C4634, C4601–C4639, C4612–C4624, C4654–C4691, C4658–C4696, C4669–C4681, C4711–C4748, C4715–C4753, C4726–C4738, C4768–C4805, C4772–C4810, C4783–C4795, C4825–C4862, C4829–C4867, and C4840–C4852. Residue T4379 is glycosylated (O-linked (GalNAc...) threonine). TSP type-1 domains follow at residues 4528–4583 (HGGF…KLCP), 4585–4640 (DGHW…RPCP), 4642–4697 (HGVW…RHCP), 4699–4754 (DGRW…DPCP), 4756–4811 (HGNW…DMCP), and 4813–4868 (DGSW…QACP). One can recognise a Nidogen G2 beta-barrel domain in the interval 4870–5092 (GPQRARGSVI…SKGDRSNQCP (223 aa)). The region spanning 5106–5145 (DEDECTAGNPCSHTCHNAIGAYYCSCPKGLTIAADGRTCQ) is the EGF-like 1; calcium-binding domain. Disulfide bonds link C5110–C5120, C5116–C5129, and C5131–C5144. Positions 5146-5189 (DIDECALGGHTCRAGQDCDNTIGSYRCVVHCGTGFRRTSDGLSC) constitute an EGF-like 2; calcium-binding domain. In terms of domain architecture, EGF-like 3; calcium-binding spans 5191–5228 (DINECQESSPCHQRCFNVIGSFHCGCEAGYQLKGRKCI). 3 cysteine pairs are disulfide-bonded: C5195–C5205, C5201–C5214, and C5216–C5227. One can recognise an EGF-like 4; calcium-binding domain in the interval 5229–5269 (DVNECRQNVCRPDQHCKNTRGGYKCIDLCPSGMTKAENGTC). The EGF-like 5; calcium-binding domain occupies 5271-5306 (DIDECKDGTHQCRYNQICENTRGSYRCACPRGYRSQ). Disulfide bonds link C5275–C5288, C5282–C5297, C5318–C5329, C5325–C5338, C5340–C5353, C5435–C5445, C5441–C5454, and C5456–C5469. Residues 5314 to 5354 (DINECEQVPKPCAHQCSNSPGSFKCICLPGQQLLGDGKSCA) form the EGF-like 6; calcium-binding domain. The EGF-like 7; calcium-binding domain occupies 5431–5470 (DIDECQNRDTCQHECKNTIGSYQCVCPPGYRLMLNGKTCQ).

In terms of tissue distribution, in the kidney, expressed in the glomerulus (at protein level). Expressed in whisker and hair follicles, eye, tongue, and splenic and lymph node conduits (at protein level). In the embryo, localizes to the cleavage furrow at the two-cell stage (at protein level). In neonatal skin, expressed throughout the dermis (at protein level). In adult skin, strongly concentrated at the dermal side of the basement membrane but not detectable in the deeper dermis. Shows tendon-specific localization at the myotendinous junction and is also detected in the perichondrium (at protein level). Expressed by chondrocytes residing in articular cartilage and the femoral growth plate of 52 week old mice (at protein level). Expressed in vascular endothelial cells in coronary arteries and sparsely in endocardial endothelium (at protein level). Expressed in skin, tongue, lung and eye. At 14.5 dpc, expressed in the vibrissae, dermis, forelimb, kidney, intestine, lung and iliac cartilage where expression is found mainly in mesenchymal cells.

It localises to the secreted. The protein localises to the extracellular space. It is found in the extracellular matrix. The protein resides in the basement membrane. Its subcellular location is the cytoplasm. It localises to the cell junction. The protein localises to the cleavage furrow. Functionally, involved in transforming growth factor beta-mediated rearrangement of the podocyte cytoskeleton which includes reduction of F-actin fibers and broadening, flattening and elongation of podocytes. Plays a role in basement membrane organization. May promote cleavage furrow maturation during cytokinesis in preimplantation embryos. May play a role in the architecture of adhesive and flexible epithelial cell junctions. May play a role during myocardial remodeling by imparting an effect on cardiac fibroblast migration. The chain is Hemicentin-1 from Mus musculus (Mouse).